The primary structure comprises 362 residues: Homoisocitrate dehydrogenase (362 aa).

Position 79-81 (79-81 (VQS)) interacts with NADH. Residue serine 81 coordinates (2R,3S)-homoisocitrate. Phosphoserine is present on residues serine 81 and serine 91. The (2R,3S)-homoisocitrate site is built by arginine 97, arginine 107, arginine 126, tyrosine 133, lysine 196, and asparagine 198. Asparagine 198 contacts NADH. Residues aspartate 232, aspartate 256, and aspartate 260 each contribute to the Mg(2+) site. Residues 289–293 (GSAPD) and asparagine 301 contribute to the NADH site.

This sequence belongs to the isocitrate and isopropylmalate dehydrogenases family. Requires Mg(2+) as cofactor.

The protein localises to the cytoplasm. It carries out the reaction (2R,3S)-homoisocitrate + NAD(+) = 2-oxoadipate + CO2 + NADH. Its pathway is amino-acid biosynthesis; L-lysine biosynthesis via AAA pathway; L-alpha-aminoadipate from 2-oxoglutarate: step 4/5. The polypeptide is Homoisocitrate dehydrogenase (lys12) (Schizosaccharomyces pombe (strain 972 / ATCC 24843) (Fission yeast)).